Consider the following 489-residue polypeptide: MPFSPPCLDPAAAAAASLSFLPAAAARPPAPCAVAPRSRRALRVAASVATAPESAAAQGRLESLSQVAGVLGTQWGDEGKGKLVDILAQRFDIVARCQGGANAGHTIYNSEGKKFSLHLVPSGILNEKTMCVVGNGAVVHLPGFFKEIDGLESNGISCEGRILVSDRAHLLFDFHQTVDGLREVELGNSLIGTTKRGIGPCYSNKVIRNGLRVSDLRHMDTFGAKLNTLLRDAALRFEGFEYSTKTLKEEVEKYEKFAERLGPYITDTVHFMNQSILQNKKILVEGGQATMLDIDFGTYPFVTSSSPSAGGICTGLGIAPRSIGDLIGVVKAYTTRVGSGPFPTELLGKTGDLLRASGMEFGTTTGRPRRCGWLDIVALKYCCQINGFSSLNLTKLDVLTGLKEVKLGIAYCTEDGKEIESFPADLDLLEKIKVKYEVLPGWEDDISSVRNYSDLPETARLYVERIEELVGIPVHYIGVGPGRDALIYK.

The N-terminal 45 residues, 1–45 (MPFSPPCLDPAAAAAASLSFLPAAAARPPAPCAVAPRSRRALRVA), are a transit peptide targeting the chloroplast. Residues 76 to 82 (GDEGKGK) and 104 to 106 (GHT) contribute to the GTP site. Asp77 acts as the Proton acceptor in catalysis. 2 residues coordinate Mg(2+): Asp77 and Gly104. IMP contacts are provided by residues 77 to 80 (DEGK), 102 to 105 (NAGH), Thr194, Arg208, Gln288, Thr303, and Arg367. His105 functions as the Proton donor in the catalytic mechanism. 363–369 (TTTGRPR) provides a ligand contact to substrate. Residues Arg369, 395–397 (KLD), and 478–480 (GVG) contribute to the GTP site.

This sequence belongs to the adenylosuccinate synthetase family. As to quaternary structure, homodimer. Mg(2+) serves as cofactor.

Its subcellular location is the plastid. The protein resides in the chloroplast. The catalysed reaction is IMP + L-aspartate + GTP = N(6)-(1,2-dicarboxyethyl)-AMP + GDP + phosphate + 2 H(+). The protein operates within purine metabolism; AMP biosynthesis via de novo pathway; AMP from IMP: step 1/2. Its function is as follows. Plays an important role in the de novo pathway and in the salvage pathway of purine nucleotide biosynthesis. Catalyzes the first committed step in the biosynthesis of AMP from IMP. The sequence is that of Adenylosuccinate synthetase 2, chloroplastic from Oryza sativa subsp. japonica (Rice).